The primary structure comprises 235 residues: uncharacterized protein (235 aa).

Residues 2 to 235 (IKLKNVTKTY…EEKLRGFDDR (234 aa)) enclose the ABC transporter domain. 38–45 (GPSGSGKS) lines the ATP pocket.

This sequence belongs to the ABC transporter superfamily.

This is an uncharacterized protein from Methanocaldococcus jannaschii (strain ATCC 43067 / DSM 2661 / JAL-1 / JCM 10045 / NBRC 100440) (Methanococcus jannaschii).